The primary structure comprises 158 residues: Transcription elongation factor GreA (158 aa).

Residues 8–74 adopt a coiled-coil conformation; that stretch reads TKGGYNKLKD…TLERVLSTAT (67 aa).

It belongs to the GreA/GreB family.

Functionally, necessary for efficient RNA polymerase transcription elongation past template-encoded arresting sites. The arresting sites in DNA have the property of trapping a certain fraction of elongating RNA polymerases that pass through, resulting in locked ternary complexes. Cleavage of the nascent transcript by cleavage factors such as GreA or GreB allows the resumption of elongation from the new 3'terminus. GreA releases sequences of 2 to 3 nucleotides. This Chloroherpeton thalassium (strain ATCC 35110 / GB-78) protein is Transcription elongation factor GreA.